We begin with the raw amino-acid sequence, 655 residues long: MAEAPQVVEIDPDFEPLPRPRSCTWPLPRPEFSQSNSATSSPAPSGSAAANPDAAAGLPSASAAAVSADFMSNLSLLEESEDFPQAPGSVAAAVAAAAAAAATGGLCGDFQGPEAGCLHPAPPQPPPPGPLSQHPPVPPAAAGPLAGQPRKSSSSRRNAWGNLSYADLITKAIESSAEKRLTLSQIYEWMVKSVPYFKDKGDSNSSAGWKNSIRHNLSLHSKFIRVQNEGTGKSSWWMLNPEGGKSGKSPRRRAASMDNNSKFAKSRSRAAKKKASLQSGQEGAGDSPGSQFSKWPASPGSHSNDDFDNWSTFRPRTSSNASTISGRLSPIMTEQDDLGEGDVHSMVYPPSAAKMASTLPSLSEISNPENMENLLDNLNLLSSPTSLTVSTQSSPGTMMQQTPCYSFAPPNTSLNSPSPNYQKYTYGQSSMSPLPQMPIQTLQDNKSSYGGMSQYNCAPGLLKELLTSDSPPHNDIMTPVDPGVAQPNSRVLGQNVMMGPNSVMSTYGSQASHNKMMNPSSHTHPGHAQQTSAVNGRPLPHTVSTMPHTSGMNRLTQVKTPVQVPLPHPMQMSALGGYSSVSSCNGYGRMGLLHQEKLPSDLDGMFIERLDCDMESIIRNDLMDGDTLDFNFDNVLPNQSFPHSVKTTTHSWVSG.

Disordered stretches follow at residues 1 to 63 (MAEA…SASA) and 116 to 158 (GCLH…SRRN). Thr-24 bears the Phosphothreonine; by PKB/AKT1 or PKB/AKT2 and SGK1 mark. Residues 33–63 (SQSNSATSSPAPSGSAAANPDAAAGLPSASA) show a composition bias toward low complexity. Pro residues predominate over residues 120–141 (PAPPQPPPPGPLSQHPPVPPAA). Positions 159–235 (AWGNLSYADL…VQNEGTGKSS (77 aa)) form a DNA-binding region, fork-head. DNA-binding regions lie at residues 211–218 (NSIRHNLS) and 234–237 (SSWW). 4 positions are modified to phosphoserine; by STK4/MST1: Ser-212, Ser-218, Ser-234, and Ser-235. The disordered stretch occupies residues 234 to 344 (SSWWMLNPEG…QDDLGEGDVH (111 aa)). Residues Lys-245 and Lys-248 each carry the N6-acetyllysine modification. A Phosphoserine; by CDK1 modification is found at Ser-249. Omega-N-methylarginine; by PRMT1 is present on residues Arg-251 and Arg-253. The Nuclear localization signal signature appears at 251–253 (RRR). At Ser-256 the chain carries Phosphoserine; by PKB/AKT1 and SGK1. N6-acetyllysine is present on residues Lys-262, Lys-265, and Lys-274. The span at 264 to 275 (AKSRSRAAKKKA) shows a compositional bias: basic residues. Residues 283-563 (GAGDSPGSQF…RLTQVKTPVQ (281 aa)) form a sufficient for interaction with NLK region. Phosphoserine is present on residues Ser-287 and Ser-298. The segment covering 309–326 (NWSTFRPRTSSNASTISG) has biased composition (polar residues). A Phosphoserine; by PKB/AKT1 modification is found at Ser-319. Ser-322 is subject to Phosphoserine; by CK1 and SGK1. Phosphoserine; by CK1 is present on Ser-325. A Phosphoserine; by DYRK1A modification is found at Ser-329. Phosphothreonine is present on Thr-333. The segment at 363–459 (SEISNPENME…GGMSQYNCAP (97 aa)) is required for interaction with RUNX2. At Lys-423 the chain carries N6-acetyllysine. Positions 462–466 (LKELL) match the Required for interaction with SIRT1 motif. Polar residues predominate over residues 507 to 534 (YGSQASHNKMMNPSSHTHPGHAQQTSAV). The disordered stretch occupies residues 507 to 537 (YGSQASHNKMMNPSSHTHPGHAQQTSAVNGR).

As to quaternary structure, interacts with LRPPRC. Interacts with RUNX2; the interaction inhibits RUNX2 transcriptional activity and mediates the IGF1/insulin-dependent BGLAP expression in osteoblasts Interacts with PPP2R1A; the interaction regulates the dephosphorylation of FOXO1 at Thr-24 and Ser-256 leading to its nuclear import. Interacts (acetylated form) with PPARG. Interacts with XBP1 isoform 2; this interaction is direct and leads to FOXO1 ubiquitination and degradation via the proteasome pathway. Interacts with NLK. Interacts with SIRT1; the interaction results in the deacetylation of FOXO1 leading to activation of FOXO1-mediated transcription of genes involved in DNA repair and stress resistance. Binds to CDK1. Interacts with the 14-3-3 proteins, YWHAG and YWHAZ; the interactions require insulin-stimulated phosphorylation on Thr-24, promote nuclear exit and loss of transcriptional activity. Interacts with SKP2; the interaction ubiquitinates FOXO1 leading to its proteasomal degradation. The interaction requires the presence of KRIT1. Interacts (via the C-terminal half) with ATF4 (via its DNA-binding domain); the interaction occurs in osteoblasts, regulates glucose homeostasis via suppression of beta-cell proliferation and subsequent decrease in insulin production. Interacts with PRMT1; the interaction methylates FOXO1, prevents PKB/AKT1 phosphorylation and retains FOXO1 in the nucleus. Interacts with EP300 and CREBBP; the interactions acetylate FOXO1. Interacts with SIRT2; the interaction is disrupted in response to oxidative stress or serum deprivation, leading to increased level of acetylated FOXO1, which promotes stress-induced autophagy by stimulating E1-like activating enzyme ATG7. Interacts (acetylated form) with ATG7; the interaction is increased in response to oxidative stress or serum deprivation and promotes the autophagic process leading to cell death. Interacts (via the Fork-head domain) with CEBPA; the interaction increases when FOXO1 is deacetylated. Interacts with WDFY2. Forms a complex with WDFY2 and AKT1. Interacts with CRY1. Interacts with PPIA/CYPA; the interaction promotes FOXO1 dephosphorylation, nuclear accumulation and transcriptional activity. Interacts with TOX4; FOXO1 is required for full induction of TOX4-dependent activity and the interaction is inhibited by insulin. Interacts (when phosphorylated on Ser-256) with STUB1/CHIP. Phosphorylation by NLK promotes nuclear export and inhibits the transcriptional activity. In response to growth factors, phosphorylation on Thr-24, Ser-256 and Ser-322 by PKB/AKT1 promotes nuclear export and inactivation of transactivational activity. Phosphorylation on Thr-24 is required for binding 14-3-3 proteins. Phosphorylation of Ser-256 decreases DNA-binding activity and promotes the phosphorylation of Thr-24 and Ser-319, permitting phosphorylation of Ser-322 and Ser-325, probably by CDK1, leading to nuclear exclusion and loss of function. Stress signals, such as response to oxygen or nitric oxide, attenuate the PKB/AKT1-mediated phosphorylation leading to nuclear retention. Phosphorylation of Ser-329 is independent of IGF1 and leads to reduced function. Dephosphorylated on Thr-24 and Ser-256 by PP2A in beta-cells under oxidative stress leading to nuclear retention. Phosphorylation of Ser-249 by CDK1 disrupts binding of 14-3-3 proteins leading to nuclear accumulation and has no effect on DNA-binding nor transcriptional activity. Phosphorylation by STK4/MST1 on Ser-212, upon oxidative stress, inhibits binding to 14-3-3 proteins and nuclear export. PPIA/CYPA promotes its dephosphorylation on Ser-256. Post-translationally, ubiquitinated by SKP2. Ubiquitination leads to proteasomal degradation. Ubiquitinated by STUB1/CHIP; when Ser-256 is phosphorylated. In terms of processing, methylation inhibits AKT1-mediated phosphorylation at Ser-256 and is increased by oxidative stress. Acetylated. Acetylation at Lys-262, Lys-265 and Lys-274 are necessary for autophagic cell death induction. Deacetylated by SIRT2 in response to oxidative stress or serum deprivation, thereby negatively regulating FOXO1-mediated autophagic cell death. Once in the nucleus, acetylated by CREBBP/EP300. Acetylation diminishes the interaction with target DNA and attenuates the transcriptional activity. It increases the phosphorylation at Ser-256. Deacetylation by SIRT1 results in reactivation of the transcriptional activity. Oxidative stress by hydrogen peroxide treatment appears to promote deacetylation and uncoupling of insulin-induced phosphorylation. By contrast, resveratrol acts independently of acetylation. Acetylated at Lys-423, promoting its localization to the nucleus and transcription factor activity. Deacetylation at Lys-423 by SIRT6, promotes its translocation into the cytoplasm, preventing its transcription factor activity. Deacetylation and subsequent inhibition by SIRT6 has different effects depending on cell types: it inhibits gluconeogenesis in hepatocytes, promotes glucose sensing in pancreatic beta-cells and regulates lipid catabolism in brown adipocytes. Expressed in umbilical endothelial cells (at protein level). Abundantly expressed in skeletal muscle and ovary, with lower expression in the heart, placenta, lung, liver, pancreas, spleen, testis and small intestine. Weakly expressed in the brain, thymus, prostate and mucosal lining of the colon.

It is found in the cytoplasm. It localises to the nucleus. Functionally, transcription factor that is the main target of insulin signaling and regulates metabolic homeostasis in response to oxidative stress. Binds to the insulin response element (IRE) with consensus sequence 5'-TT[G/A]TTTTG-3' and the related Daf-16 family binding element (DBE) with consensus sequence 5'-TT[G/A]TTTAC-3'. Activity suppressed by insulin. Main regulator of redox balance and osteoblast numbers and controls bone mass. Orchestrates the endocrine function of the skeleton in regulating glucose metabolism. Also acts as a key regulator of chondrogenic commitment of skeletal progenitor cells in response to lipid availability: when lipids levels are low, translocates to the nucleus and promotes expression of SOX9, which induces chondrogenic commitment and suppresses fatty acid oxidation. Acts synergistically with ATF4 to suppress osteocalcin/BGLAP activity, increasing glucose levels and triggering glucose intolerance and insulin insensitivity. Also suppresses the transcriptional activity of RUNX2, an upstream activator of osteocalcin/BGLAP. Acts as an inhibitor of glucose sensing in pancreatic beta cells by acting as a transcription repressor and suppressing expression of PDX1. In hepatocytes, promotes gluconeogenesis by acting together with PPARGC1A and CEBPA to activate the expression of genes such as IGFBP1, G6PC1 and PCK1. Also promotes gluconeogenesis by directly promoting expression of PPARGC1A and G6PC1. Important regulator of cell death acting downstream of CDK1, PKB/AKT1 and STK4/MST1. Promotes neural cell death. Mediates insulin action on adipose tissue. Regulates the expression of adipogenic genes such as PPARG during preadipocyte differentiation and, adipocyte size and adipose tissue-specific gene expression in response to excessive calorie intake. Regulates the transcriptional activity of GADD45A and repair of nitric oxide-damaged DNA in beta-cells. Required for the autophagic cell death induction in response to starvation or oxidative stress in a transcription-independent manner. Mediates the function of MLIP in cardiomyocytes hypertrophy and cardiac remodeling. Positive regulator of apoptosis in cardiac smooth muscle cells as a result of its transcriptional activation of pro-apoptotic genes. Regulates endothelial cell (EC) viability and apoptosis in a PPIA/CYPA-dependent manner via transcription of CCL2 and BCL2L11 which are involved in EC chemotaxis and apoptosis. In Homo sapiens (Human), this protein is Forkhead box protein O1.